The chain runs to 184 residues: Photosystem I assembly protein Ycf4 (184 aa).

A run of 2 helical transmembrane segments spans residues 19-39 (ISNL…FLVG) and 57-77 (IIFF…LFIS).

This sequence belongs to the Ycf4 family.

It localises to the plastid thylakoid membrane. In terms of biological role, seems to be required for the assembly of the photosystem I complex. This Cuscuta exaltata (Tall dodder) protein is Photosystem I assembly protein Ycf4.